The sequence spans 254 residues: Probable phosphatase Sbal223_2880 (254 aa).

Histidine 8, histidine 10, histidine 16, histidine 41, glutamate 74, histidine 102, histidine 132, aspartate 193, and histidine 195 together coordinate Zn(2+).

This sequence belongs to the PHP family. Zn(2+) serves as cofactor.

This Shewanella baltica (strain OS223) protein is Probable phosphatase Sbal223_2880.